Here is a 60-residue protein sequence, read N- to C-terminus: Large ribosomal subunit protein bL32 (60 aa).

Residues 1 to 60 (MAVQQNKKSPSKRGMHRSHDFLVNPPTAIEPTTGESHLRHHISPNGFYRGRKILKTKADE) form a disordered region. Residues 49-60 (RGRKILKTKADE) are compositionally biased toward basic residues.

Belongs to the bacterial ribosomal protein bL32 family.

In Bordetella avium (strain 197N), this protein is Large ribosomal subunit protein bL32.